Here is a 362-residue protein sequence, read N- to C-terminus: 3-dehydroquinate synthase (362 aa).

NAD(+) contacts are provided by residues 71 to 76 (DGEKYK), 105 to 109 (GVIGD), 129 to 130 (TT), K142, K151, and 169 to 172 (CLKT). 3 residues coordinate Zn(2+): E184, H247, and H264.

It belongs to the sugar phosphate cyclases superfamily. Dehydroquinate synthase family. The cofactor is Co(2+). Zn(2+) is required as a cofactor. It depends on NAD(+) as a cofactor.

The protein localises to the cytoplasm. The enzyme catalyses 7-phospho-2-dehydro-3-deoxy-D-arabino-heptonate = 3-dehydroquinate + phosphate. Its pathway is metabolic intermediate biosynthesis; chorismate biosynthesis; chorismate from D-erythrose 4-phosphate and phosphoenolpyruvate: step 2/7. Its function is as follows. Catalyzes the conversion of 3-deoxy-D-arabino-heptulosonate 7-phosphate (DAHP) to dehydroquinate (DHQ). The sequence is that of 3-dehydroquinate synthase from Citrobacter koseri (strain ATCC BAA-895 / CDC 4225-83 / SGSC4696).